Consider the following 138-residue polypeptide: Basic leucine zipper 8 (138 aa).

A disordered region spans residues 30–67; sequence NLPATSDDSSRTAEDNERKRRRKVSNRESARRSRMRKQ. A compositionally biased stretch (basic and acidic residues) spans 37–47; that stretch reads DSSRTAEDNER. The bZIP domain occupies 45-108; it reads NERKRRRKVS…EKVIEENMKL (64 aa). The segment at 47–68 is basic motif; it reads RKRRRKVSNRESARRSRMRKQR. Positions 48–55 match the Nuclear localization signal motif; that stretch reads KRRRKVSN. Positions 73-87 are leucine-zipper; the sequence is LWSMLVQLINKNKSL.

Belongs to the bZIP family. In terms of assembly, homodimer.

Its subcellular location is the nucleus. This Arabidopsis thaliana (Mouse-ear cress) protein is Basic leucine zipper 8.